The chain runs to 492 residues: Fibroblast growth factor receptor substrate 3 (492 aa).

The N-myristoyl glycine moiety is linked to residue glycine 2. An IRS-type PTB domain is found at 13–115; sequence VPHNHPTKFK…QCNSINVTEE (103 aa). 4 disordered regions span residues 122-230, 328-414, 426-454, and 469-492; these read SSHP…SDQR, LPPV…PPRQ, GTAR…SSDS, and LQRA…DLPL. Over residues 371–382 the composition is skewed to polar residues; sequence QKPTSTRASARS.

As to quaternary structure, binds NGFR, GRB2, PTPN11 and ERK2. Binds FGFR1 and NTRK1. Post-translationally, phosphorylated on tyrosine residues upon stimulation by BFGF or NGFB. Phosphorylated by ULK2 in vitro.

It is found in the membrane. Functionally, adapter protein that links FGF and NGF receptors to downstream signaling pathways. Involved in the activation of MAP kinases. Down-regulates ERK2 signaling by interfering with the phosphorylation and nuclear translocation of ERK2. The protein is Fibroblast growth factor receptor substrate 3 (Frs3) of Mus musculus (Mouse).